The following is a 102-amino-acid chain: Small ribosomal subunit protein uS10 (102 aa).

The protein belongs to the universal ribosomal protein uS10 family. In terms of assembly, part of the 30S ribosomal subunit.

Involved in the binding of tRNA to the ribosomes. The polypeptide is Small ribosomal subunit protein uS10 (Treponema pallidum (strain Nichols)).